Reading from the N-terminus, the 332-residue chain is Stage II sporulation protein B (332 aa).

Positions 1 to 10 are enriched in basic residues; that stretch reads MKKRKNKKNS. A disordered region spans residues 1 to 71; the sequence is MKKRKNKKNS…EHPDEDEFNW (71 aa). Residues 11–27 are compositionally biased toward basic and acidic residues; that stretch reads KAAEKALKVTINGKEET. Residues 112 to 132 traverse the membrane as a helical segment; the sequence is AATIAFAAVIGTGLGLFALNI. Residues 139–174 are disordered; it reads SAPASLEDSLGSQTAKAGDTSADKQTSGAEKQAAQT. The span at 161–174 shows a compositional bias: polar residues; the sequence is DKQTSGAEKQAAQT. Residues 175-250 enclose the SPOR domain; sequence EGTYKTYAVQ…SDFEAWGGKE (76 aa).

The protein resides in the cell membrane. With respect to regulation, appears to be degraded early in engulfment, in correlation with its loss from polar septa. In terms of biological role, facilitates the rapid and spatially regulated dissolution of septal peptidoglycan. In Bacillus subtilis (strain 168), this protein is Stage II sporulation protein B.